A 479-amino-acid chain; its full sequence is Adenosylhomocysteinase (479 aa).

Residues Thr65, Asp145, and Glu205 each coordinate substrate. Thr206–Thr208 is an NAD(+) binding site. Substrate-binding residues include Lys235 and Asp239. NAD(+) contacts are provided by residues Asn240, Gly269 to Gly274, Glu292, Asn327, Ile348 to His350, and Asn393.

It belongs to the adenosylhomocysteinase family. NAD(+) serves as cofactor.

It is found in the cytoplasm. It catalyses the reaction S-adenosyl-L-homocysteine + H2O = L-homocysteine + adenosine. It participates in amino-acid biosynthesis; L-homocysteine biosynthesis; L-homocysteine from S-adenosyl-L-homocysteine: step 1/1. In terms of biological role, may play a key role in the regulation of the intracellular concentration of adenosylhomocysteine. The polypeptide is Adenosylhomocysteinase (Janthinobacterium sp. (strain Marseille) (Minibacterium massiliensis)).